We begin with the raw amino-acid sequence, 45 residues long: Large ribosomal subunit protein bL34 (45 aa).

Residues 1 to 45 (MTKRTFGGTSRKRKRVSGFRVRMRSHTGRRVIKSRRQKGRERIAV) are disordered. A compositionally biased stretch (basic residues) spans 10-39 (SRKRKRVSGFRVRMRSHTGRRVIKSRRQKG).

It belongs to the bacterial ribosomal protein bL34 family.

The chain is Large ribosomal subunit protein bL34 from Prochlorococcus marinus (strain MIT 9301).